We begin with the raw amino-acid sequence, 502 residues long: Arabinose import ATP-binding protein AraG (502 aa).

2 ABC transporter domains span residues 5 to 240 (LEFS…MVGR) and 253 to 496 (LGGI…LPDK). 37 to 44 (GENGAGKS) contacts ATP.

This sequence belongs to the ABC transporter superfamily. Arabinose importer (TC 3.A.1.2.2) family. In terms of assembly, the complex is composed of two ATP-binding proteins (AraG), two transmembrane proteins (AraH) and a solute-binding protein (AraF).

It is found in the cell inner membrane. It catalyses the reaction L-arabinose(out) + ATP + H2O = L-arabinose(in) + ADP + phosphate + H(+). Functionally, part of the ABC transporter complex AraFGH involved in arabinose import. Responsible for energy coupling to the transport system. This Rhizobium johnstonii (strain DSM 114642 / LMG 32736 / 3841) (Rhizobium leguminosarum bv. viciae) protein is Arabinose import ATP-binding protein AraG.